The following is a 132-amino-acid chain: Small ribosomal subunit protein uS8c (132 aa).

The protein belongs to the universal ribosomal protein uS8 family. As to quaternary structure, part of the 30S ribosomal subunit.

Its subcellular location is the plastid. It localises to the chloroplast. Functionally, one of the primary rRNA binding proteins, it binds directly to 16S rRNA central domain where it helps coordinate assembly of the platform of the 30S subunit. The polypeptide is Small ribosomal subunit protein uS8c (rps8) (Phaeodactylum tricornutum (strain CCAP 1055/1)).